Reading from the N-terminus, the 622-residue chain is Dopamine beta-hydroxylase (622 aa).

The Cytoplasmic portion of the chain corresponds to 1–20 (MQAHLSHQPCWSSLPSPSVR). A helical; Signal-anchor for type II membrane protein membrane pass occupies residues 21 to 41 (EAASMYGTAVAIFLVILVAAL). The Intragranular segment spans residues 42–621 (RGSEPPESPF…TVPITTEADA (580 aa)). The 117-residue stretch at 61-177 (GILELSWNVS…DTVHLVYGIL (117 aa)) folds into the DOMON domain. N-linked (GlcNAc...) asparagine glycans are attached at residues Asn68 and Asn188. 6 disulfides stabilise this stretch: Cys158/Cys600, Cys236/Cys287, Cys273/Cys299, Cys394/Cys507, Cys398/Cys569, and Cys470/Cys492. Tyr234 is a catalytic residue. His266 and His267 together coordinate Cu(2+). Residue His337 participates in Cu(2+) binding. At Ser350 the chain carries Phosphoserine; by CaMK. Residue His416 is part of the active site. 2 residues coordinate Cu(2+): His416 and His418. Asn476 carries an N-linked (GlcNAc...) asparagine glycan. Met491 is a Cu(2+) binding site. An N-linked (GlcNAc...) asparagine glycan is attached at Asn570. Positions 594–622 (EEPTPRCPIRQTQSPANPTVPITTEADAE) are disordered. The span at 603–615 (RQTQSPANPTVPI) shows a compositional bias: polar residues.

Belongs to the copper type II ascorbate-dependent monooxygenase family. As to quaternary structure, homotetramer; composed of two disulfide-linked dimers. It depends on Cu(2+) as a cofactor. Proteolytic cleavage after the membrane-anchor leads to the release of the soluble form. Post-translationally, N-glycosylated. In terms of tissue distribution, detected in adrenal gland secretory granules (at protein level). Detected in adrenal gland.

It localises to the cytoplasmic vesicle. The protein resides in the secretory vesicle lumen. Its subcellular location is the secretory vesicle. It is found in the chromaffin granule lumen. The protein localises to the secretory vesicle membrane. It localises to the chromaffin granule membrane. It carries out the reaction dopamine + 2 L-ascorbate + O2 = (R)-noradrenaline + 2 monodehydro-L-ascorbate radical + H2O. It functions in the pathway catecholamine biosynthesis; (R)-noradrenaline biosynthesis; (R)-noradrenaline from dopamine: step 1/1. Functionally, catalyzes the hydroxylation of dopamine to noradrenaline (also known as norepinephrine), and is thus vital for regulation of these neurotransmitters. In Mus musculus (Mouse), this protein is Dopamine beta-hydroxylase (Dbh).